The sequence spans 113 residues: MSQEIYDYANQLERAVRALPEYQKVLEVKEAIQADASASELFDEFVAMQEKIQGMMQSGQMPTAEEQTSIQELSQKIEANDQLKAYFEAQQALSVYMSDIERIVFAPLKDLVK.

The protein belongs to the UPF0342 family.

The protein is UPF0342 protein MGAS2096_Spy0691 of Streptococcus pyogenes serotype M12 (strain MGAS2096).